Consider the following 221-residue polypeptide: Germin-like protein 8-2 (221 aa).

The first 24 residues, 1 to 24 (MASSSFSFLLVAALLGLASWKAIA), serve as a signal peptide directing secretion. The cysteines at positions 34 and 49 are disulfide-linked. N-linked (GlcNAc...) asparagine glycosylation is found at N54 and N79. One can recognise a Cupin type-1 domain in the interval 64–215 (AMLDKPRDTN…AFQVDKKIID (152 aa)). Residues H112, H114, E119, and H160 each coordinate Mn(2+).

This sequence belongs to the germin family. Oligomer (believed to be a pentamer but probably hexamer).

It is found in the secreted. It localises to the extracellular space. The protein resides in the apoplast. Functionally, plays a role in broad-spectrum disease resistance. Probably has no oxalate oxidase activity even if the active site is conserved. The polypeptide is Germin-like protein 8-2 (GER3) (Oryza sativa subsp. japonica (Rice)).